An 808-amino-acid polypeptide reads, in one-letter code: Sucrose synthase (808 aa).

Residues 271–753 are GT-B glycosyltransferase; the sequence is MLFRIALISP…GIERVYSTYT (483 aa).

It belongs to the glycosyltransferase 1 family. As to quaternary structure, probably a homotetramer.

The enzyme catalyses an NDP-alpha-D-glucose + D-fructose = a ribonucleoside 5'-diphosphate + sucrose + H(+). It carries out the reaction ADP-alpha-D-glucose + D-fructose = sucrose + ADP + H(+). In terms of biological role, catalyzes the reversible conversion of sucrose and a nucleotide disphosphate (NDP) into fructose and NDP-glucose; although the reaction is freely reversible in vitro, the physiological reaction seems to be sucrose cleavage. Unlike characterized plant enzymes prefers ADP as a cosubstrate, whereas plants prefer UDP. Its preference for ADP over UDP suggests it may directly link sucrose and glycogen metabolism. In Thermosynechococcus vestitus (strain NIES-2133 / IAM M-273 / BP-1), this protein is Sucrose synthase.